A 1598-amino-acid chain; its full sequence is Pentafunctional AROM polypeptide (1598 aa).

Residues 1–384 form a 3-dehydroquinate synthase region; it reads MGVPTKISIL…YEPRASTVSN (384 aa). NAD(+)-binding positions include 44 to 46, 81 to 84, 114 to 116, and aspartate 119; these read DTN, ESSK, and GGV. Arginine 130 serves as a coordination point for 7-phospho-2-dehydro-3-deoxy-D-arabino-heptonate. An NAD(+)-binding site is contributed by 139–140; it reads TT. 7-phospho-2-dehydro-3-deoxy-D-arabino-heptonate-binding residues include aspartate 146 and lysine 152. Lysine 161 contributes to the NAD(+) binding site. Asparagine 162 is a 7-phospho-2-dehydro-3-deoxy-D-arabino-heptonate binding site. NAD(+) is bound by residues 179–182 and asparagine 190; that span reads FLNT. Zn(2+) is bound at residue glutamate 194. 7-phospho-2-dehydro-3-deoxy-D-arabino-heptonate-binding positions include 194-197 and lysine 250; that span reads EVIK. Catalysis depends on glutamate 260, which acts as the Proton acceptor; for 3-dehydroquinate synthase activity. Residues 264 to 268 and histidine 271 contribute to the 7-phospho-2-dehydro-3-deoxy-D-arabino-heptonate site; that span reads RNLLN. Histidine 271 lines the Zn(2+) pocket. The active-site Proton acceptor; for 3-dehydroquinate synthase activity is histidine 275. 7-phospho-2-dehydro-3-deoxy-D-arabino-heptonate is bound by residues histidine 287 and lysine 356. Zn(2+) is bound at residue histidine 287. Residues 397–842 are EPSP synthase; sequence VYPGFPKSLN…WNTLAQTFKV (446 aa). The active-site For EPSP synthase activity is the cysteine 824. Residues 867–1059 are shikimate kinase; sequence AASIFIIGMR…RRKENTFFVS (193 aa). 874 to 881 serves as a coordination point for ATP; that stretch reads GMRGAGKT. The interval 1060–1280 is 3-dehydroquinase; that stretch reads LTFPDLTPAS…AAPGQLSARE (221 aa). Residue histidine 1183 is the Proton acceptor; for 3-dehydroquinate dehydratase activity of the active site. The active-site Schiff-base intermediate with substrate; for 3-dehydroquinate dehydratase activity is the lysine 1211. Residues 1293–1598 are shikimate dehydrogenase; sequence AKKFAVIGKP…GVSSSDDTIS (306 aa).

In the N-terminal section; belongs to the sugar phosphate cyclases superfamily. Dehydroquinate synthase family. The protein in the 2nd section; belongs to the EPSP synthase family. This sequence in the 3rd section; belongs to the shikimate kinase family. It in the 4th section; belongs to the type-I 3-dehydroquinase family. In the C-terminal section; belongs to the shikimate dehydrogenase family. In terms of assembly, homodimer. Requires Zn(2+) as cofactor.

The protein localises to the cytoplasm. The enzyme catalyses 7-phospho-2-dehydro-3-deoxy-D-arabino-heptonate = 3-dehydroquinate + phosphate. It carries out the reaction 3-dehydroquinate = 3-dehydroshikimate + H2O. The catalysed reaction is shikimate + NADP(+) = 3-dehydroshikimate + NADPH + H(+). It catalyses the reaction shikimate + ATP = 3-phosphoshikimate + ADP + H(+). The enzyme catalyses 3-phosphoshikimate + phosphoenolpyruvate = 5-O-(1-carboxyvinyl)-3-phosphoshikimate + phosphate. It participates in metabolic intermediate biosynthesis; chorismate biosynthesis; chorismate from D-erythrose 4-phosphate and phosphoenolpyruvate: step 2/7. Its pathway is metabolic intermediate biosynthesis; chorismate biosynthesis; chorismate from D-erythrose 4-phosphate and phosphoenolpyruvate: step 3/7. The protein operates within metabolic intermediate biosynthesis; chorismate biosynthesis; chorismate from D-erythrose 4-phosphate and phosphoenolpyruvate: step 4/7. It functions in the pathway metabolic intermediate biosynthesis; chorismate biosynthesis; chorismate from D-erythrose 4-phosphate and phosphoenolpyruvate: step 5/7. It participates in metabolic intermediate biosynthesis; chorismate biosynthesis; chorismate from D-erythrose 4-phosphate and phosphoenolpyruvate: step 6/7. Its function is as follows. The AROM polypeptide catalyzes 5 consecutive enzymatic reactions in prechorismate polyaromatic amino acid biosynthesis. This is Pentafunctional AROM polypeptide from Paracoccidioides brasiliensis (strain Pb18).